The chain runs to 226 residues: Endonuclease V (226 aa).

The Mg(2+) site is built by Asp43 and Asp111.

It belongs to the endonuclease V family. Requires Mg(2+) as cofactor.

The protein resides in the cytoplasm. It carries out the reaction Endonucleolytic cleavage at apurinic or apyrimidinic sites to products with a 5'-phosphate.. Its function is as follows. DNA repair enzyme involved in the repair of deaminated bases. Selectively cleaves double-stranded DNA at the second phosphodiester bond 3' to a deoxyinosine leaving behind the intact lesion on the nicked DNA. This chain is Endonuclease V, found in Nocardia farcinica (strain IFM 10152).